The sequence spans 220 residues: MAGLSRGSARALLAALLASTLLALLVSPARGRGGRDHGDWDEASRLPPLPPREDAARVARFVTHVSDWGALATISTLEAVRGRPFADVLSLSDGPPGAGSGVPYFYLSPLQLSVSNLQENPYATLTMTLAQTNFCKKHGFDPQSPLCVHIMLSGTVTKVNETEMDIAKHSLFIRHPEMKTWPSSHNWFFAKLNITNIWVLDYFGGPKIVTPEEYYNVTVQ.

A signal peptide spans 1 to 31; sequence MAGLSRGSARALLAALLASTLLALLVSPARG. N-linked (GlcNAc...) asparagine glycosylation is found at N160, N193, and N216.

Belongs to the CREG family. Homodimer. Interacts with IGF2R; the interaction is dependent on glycosylation. N-glycosylated.

The protein localises to the secreted. May contribute to the transcriptional control of cell growth and differentiation. Antagonizes transcriptional activation and cellular transformation by the adenovirus E1A protein. The transcriptional control activity of cell growth requires interaction with IGF2R. The sequence is that of Protein CREG1 (CREG1) from Homo sapiens (Human).